We begin with the raw amino-acid sequence, 209 residues long: Orotate phosphoribosyltransferase (209 aa).

5-phospho-alpha-D-ribose 1-diphosphate is bound by residues arginine 96, lysine 100, histidine 102, and 122-130 (EDLISTGGS). Serine 126 is an orotate binding site.

Belongs to the purine/pyrimidine phosphoribosyltransferase family. PyrE subfamily. In terms of assembly, homodimer. Mg(2+) serves as cofactor.

The enzyme catalyses orotidine 5'-phosphate + diphosphate = orotate + 5-phospho-alpha-D-ribose 1-diphosphate. It participates in pyrimidine metabolism; UMP biosynthesis via de novo pathway; UMP from orotate: step 1/2. Catalyzes the transfer of a ribosyl phosphate group from 5-phosphoribose 1-diphosphate to orotate, leading to the formation of orotidine monophosphate (OMP). The chain is Orotate phosphoribosyltransferase from Streptococcus pyogenes serotype M3 (strain ATCC BAA-595 / MGAS315).